Consider the following 107-residue polypeptide: Ig kappa chain V region 4135 (107 aa).

Positions alanine 1 to cysteine 24 are framework-1. The complementarity-determining-1 stretch occupies residues glutamine 25–serine 35. The interval tryptophan 36–tyrosine 50 is framework-2. A complementarity-determining-2 region spans residues arginine 51–serine 57. The tract at residues glycine 58–cysteine 89 is framework-3. Positions glutamine 90–glycine 96 are complementarity-determining-3. Residues phenylalanine 97 to lysine 106 are framework-4.

The chain is Ig kappa chain V region 4135 from Oryctolagus cuniculus (Rabbit).